The sequence spans 465 residues: Ribulose bisphosphate carboxylase large chain (465 aa).

The residue at position 4 (lysine 4) is an N6,N6,N6-trimethyllysine. Substrate is bound by residues asparagine 113 and threonine 163. The active-site Proton acceptor is lysine 165. Lysine 167 contacts substrate. Residues lysine 191, aspartate 193, and glutamate 194 each coordinate Mg(2+). Lysine 191 bears the N6-carboxylysine mark. Catalysis depends on histidine 284, which acts as the Proton acceptor. Substrate is bound by residues arginine 285, histidine 317, and serine 369.

This sequence belongs to the RuBisCO large chain family. Type I subfamily. In terms of assembly, heterohexadecamer of 8 large chains and 8 small chains; disulfide-linked. The disulfide link is formed within the large subunit homodimers. It depends on Mg(2+) as a cofactor. In terms of processing, the disulfide bond which can form in the large chain dimeric partners within the hexadecamer appears to be associated with oxidative stress and protein turnover.

The protein localises to the plastid. The protein resides in the chloroplast. The catalysed reaction is 2 (2R)-3-phosphoglycerate + 2 H(+) = D-ribulose 1,5-bisphosphate + CO2 + H2O. It catalyses the reaction D-ribulose 1,5-bisphosphate + O2 = 2-phosphoglycolate + (2R)-3-phosphoglycerate + 2 H(+). In terms of biological role, ruBisCO catalyzes two reactions: the carboxylation of D-ribulose 1,5-bisphosphate, the primary event in carbon dioxide fixation, as well as the oxidative fragmentation of the pentose substrate in the photorespiration process. Both reactions occur simultaneously and in competition at the same active site. The chain is Ribulose bisphosphate carboxylase large chain from Morella cerifera (Wax myrtle).